The following is an 80-amino-acid chain: Conotoxin ArMKLT2-0321 (80 aa).

The signal sequence occupies residues methionine 1 to threonine 21. Positions alanine 22–arginine 48 are excised as a propeptide. 3 cysteine pairs are disulfide-bonded: cysteine 50-cysteine 63, cysteine 57-cysteine 68, and cysteine 62-cysteine 77.

It belongs to the conotoxin O1 superfamily. As to expression, expressed by the venom duct.

Its subcellular location is the secreted. The polypeptide is Conotoxin ArMKLT2-0321 (Conus arenatus (Sand-dusted cone)).